The following is a 312-amino-acid chain: Zinc finger CCCH domain-containing protein 25 (312 aa).

Residues Ala-36–Lys-114 form the RRM domain. The C3H1-type zinc-finger motif lies at Arg-130–Gln-157. Residues Ser-153–Arg-312 form a disordered region. 3 stretches are compositionally biased toward basic and acidic residues: residues Ser-166 to Met-184, Arg-197 to Gly-210, and Glu-219 to Arg-312.

The protein is Zinc finger CCCH domain-containing protein 25 of Oryza sativa subsp. japonica (Rice).